Here is a 481-residue protein sequence, read N- to C-terminus: METMPNWLMQRAFLTPDRIAIETKEEKITFFALHEKVVSVCENLAYLQIKKGQKVAVLMKNGMEMIAVIHALSYIGAIAVLLNTRLSREELLWQMEDAEVICLLTDQIFEPEQVPVYTFEEVENGPKQSVVIQEEFSLAEAMTIIYTSGTTGKPKGVILTYGNHWASAVGSSLNLGLRDDDCWLACMPMFHVGGLSLLMKNIMYGMRVLLVPKYDPDFIHQAIQTKGVTIISVVAKMLTDLLERLGNETYPSSLRCMLLGGGPAPKPLLEACVQKGIPVYQTYGMTETSSQICTLSADYMLTKVGSAGKPLFPCQLRIEKDGKVMPANVEGEIVVKGPNVTRGYFKREDATRETIVDGWLHTGDLGYVDDEGFLYVLDRRSDLIISGGENIYPAQIEEVLLSHPLVLEAGVVGKSDETWGQVPVAFVVKAGQVTEEEMIHFCEEKLAKYKVPKAVYFLHELPRNASKKLLRRELRQLLEEK.

The protein belongs to the ATP-dependent AMP-binding enzyme family. MenE subfamily.

It catalyses the reaction 2-succinylbenzoate + ATP + CoA = 2-succinylbenzoyl-CoA + AMP + diphosphate. It participates in quinol/quinone metabolism; 1,4-dihydroxy-2-naphthoate biosynthesis; 1,4-dihydroxy-2-naphthoate from chorismate: step 5/7. Its pathway is quinol/quinone metabolism; menaquinone biosynthesis. Functionally, converts 2-succinylbenzoate (OSB) to 2-succinylbenzoyl-CoA (OSB-CoA). This Bacillus cytotoxicus (strain DSM 22905 / CIP 110041 / 391-98 / NVH 391-98) protein is 2-succinylbenzoate--CoA ligase.